The chain runs to 470 residues: Sorting nexin-17 (470 aa).

The PX domain maps to 1–109 (MHFSIPETES…SFLRRAQQET (109 aa)). A 1,2-diacyl-sn-glycero-3-phospho-(1D-myo-inositol-3-phosphate) contacts are provided by arginine 36, serine 38, lysine 62, and arginine 75. The 92-residue stretch at 115-206 (EEVSLEVLLS…YKIVLRKSYW (92 aa)) folds into the Ras-associating domain. The tract at residues 115–432 (EEVSLEVLLS…DASRESMVKL (318 aa)) is FERM-like. Residues 270–432 (GYLRFDACVA…DASRESMVKL (163 aa)) form a PTB-like F3 module region. Phosphoserine occurs at positions 336, 407, 409, 415, 421, 437, and 440. Residues 400–426 (VGGTLRRSDSQQAVKSPPLLESPDASR) form a disordered region.

It belongs to the sorting nexin family. Monomer. Interacts with APP (via cytoplasmic YXNPXY motif). Interacts with KIF1B. Interacts with the C-termini of P-selectin, PTC, LDLR, VLDLR, LRP1 and LRP8. Interacts with KRIT1 (via N-terminus). Interacts with HRAS. Interacts with ITGB1 and ITGB5 (via NPxY motif). Interacts with CCDC22 and CCDC93; the interaction associates SNX17 with the CCC complex. Interacts (via C-terminus) with VPS26C and VPS35L; the interactions are direct and associate SNX17 with the retriever complex.

The protein resides in the cytoplasm. Its subcellular location is the early endosome. It is found in the cytoplasmic vesicle membrane. Its function is as follows. Critical regulator of endosomal recycling of numerous surface proteins, including integrins, signaling receptor and channels. Binds to NPxY sequences in the cytoplasmic tails of target cargos. Associates with retriever and CCC complexes to prevent lysosomal degradation and promote cell surface recycling of numerous cargos such as integrins ITGB1, ITGB5 and their associated alpha subunits. Also required for maintenance of normal cell surface levels of APP and LRP1. Interacts with membranes containing phosphatidylinositol 3-phosphate (PtdIns(3P)). The polypeptide is Sorting nexin-17 (SNX17) (Bos taurus (Bovine)).